The chain runs to 146 residues: Hemoglobin subunit beta (146 aa).

Position 1 is an N-acetylvaline (V1). The Globin domain occupies 2 to 146; sequence HLTGEEKAAV…VATALAHKYH (145 aa). At T12 the chain carries Phosphothreonine. A Phosphoserine modification is found at S44. K59 is modified (N6-acetyllysine). H63 is a heme b binding site. The residue at position 82 (K82) is an N6-acetyllysine. H92 serves as a coordination point for heme b. An S-nitrosocysteine modification is found at C93. Residue K144 is modified to N6-acetyllysine.

The protein belongs to the globin family. As to quaternary structure, heterotetramer of two alpha chains and two beta chains. As to expression, red blood cells.

Functionally, involved in oxygen transport from the lung to the various peripheral tissues. The sequence is that of Hemoglobin subunit beta (HBB) from Macroderma gigas (Australian ghost bat).